We begin with the raw amino-acid sequence, 79 residues long: D-alanyl carrier protein (79 aa).

The Carrier domain maps to Met1–Gln77. An O-(pantetheine 4'-phosphoryl)serine modification is found at Ser35.

It belongs to the DltC family. 4'-phosphopantetheine is transferred from CoA to a specific serine of apo-DCP.

The protein localises to the cytoplasm. The protein operates within cell wall biogenesis; lipoteichoic acid biosynthesis. Carrier protein involved in the D-alanylation of lipoteichoic acid (LTA). The loading of thioester-linked D-alanine onto DltC is catalyzed by D-alanine--D-alanyl carrier protein ligase DltA. The DltC-carried D-alanyl group is further transferred to cell membrane phosphatidylglycerol (PG) by forming an ester bond, probably catalyzed by DltD. D-alanylation of LTA plays an important role in modulating the properties of the cell wall in Gram-positive bacteria, influencing the net charge of the cell wall. The sequence is that of D-alanyl carrier protein from Streptococcus pneumoniae serotype 2 (strain D39 / NCTC 7466).